A 123-amino-acid chain; its full sequence is Kininogen (123 aa).

In terms of processing, bradykinin is released from kininogen by kallikrein. Post-translationally, N-glycosylated. Contains sulfated N-acetylglucosamine and O-acetylated sialic acids as terminal elements on biantennary and triantennary N-glycans.

Functionally, inhibits papain and ficin (cysteine proteinases) but not trypsin (a serine proteinase). This is Kininogen from Gadus morhua (Atlantic cod).